Reading from the N-terminus, the 176-residue chain is Oleosin Ara h 14.0101 (176 aa).

The residue at position 2 (Ala-2) is an N-acetylalanine; alternate. A run of 2 helical transmembrane segments spans residues 50-80 and 95-117; these read IIAVLVGVPTGGTLLLLSGLSLLGTIIGLAI and AVVTIGLAVTGILTAGACGLTGL. Residues 157 to 176 are disordered; that stretch reads TKDAGQQIQTKAQDVKRSSS.

Belongs to the oleosin family. Homodimer. Forms oligomers. As to expression, expressed in seeds (at protein level). Not expressed in leaves.

Its subcellular location is the lipid droplet. The protein resides in the membrane. Functionally, may have a structural role to stabilize the lipid body during desiccation of the seed by preventing coalescence of the oil. Probably interacts with both lipid and phospholipid moieties of lipid bodies. May also provide recognition signals for specific lipase anchorage in lipolysis during seedling growth. In Arachis hypogaea (Peanut), this protein is Oleosin Ara h 14.0101.